We begin with the raw amino-acid sequence, 93 residues long: UPF0473 protein RBAM_024480 (93 aa).

Belongs to the UPF0473 family.

This is UPF0473 protein RBAM_024480 from Bacillus velezensis (strain DSM 23117 / BGSC 10A6 / LMG 26770 / FZB42) (Bacillus amyloliquefaciens subsp. plantarum).